The following is a 1507-amino-acid chain: Protein TIC 214 (1507 aa).

A run of 6 helical transmembrane segments spans residues 4-24 (IYLV…LPIG), 53-73 (TILL…VLAL), 81-101 (LWVK…IYLY), 129-149 (AFLE…NPVF), 163-183 (ISTF…IFFL), and 202-222 (LVKI…SFLC).

The protein belongs to the TIC214 family. Part of the Tic complex.

The protein localises to the plastid. The protein resides in the chloroplast inner membrane. Involved in protein precursor import into chloroplasts. May be part of an intermediate translocation complex acting as a protein-conducting channel at the inner envelope. This chain is Protein TIC 214, found in Staurastrum punctulatum (Green alga).